Reading from the N-terminus, the 336-residue chain is Cell division protein ZipA (336 aa).

Over 1-6 (MMQDLR) the chain is Periplasmic. Residues 7 to 27 (LILIVVGAIAIIALLLHGLWT) form a helical membrane-spanning segment. Over 28-336 (SRKERSSLFR…RIRDVLKANA (309 aa)) the chain is Cytoplasmic. Residues 40–51 (PVKRAKKARDET) show a composition bias toward basic and acidic residues. The interval 40-190 (PVKRAKKARD…APAQPQQPAE (151 aa)) is disordered. The segment covering 76–89 (SFSSSSFDNASFDN) has biased composition (low complexity). Positions 126–138 (PRSQVRGDSNPQV) are enriched in polar residues. Low complexity predominate over residues 179 to 190 (QPAPAQPQQPAE).

It belongs to the ZipA family. In terms of assembly, interacts with FtsZ via their C-terminal domains.

Its subcellular location is the cell inner membrane. Its function is as follows. Essential cell division protein that stabilizes the FtsZ protofilaments by cross-linking them and that serves as a cytoplasmic membrane anchor for the Z ring. Also required for the recruitment to the septal ring of downstream cell division proteins. The protein is Cell division protein ZipA of Pectobacterium carotovorum subsp. carotovorum (strain PC1).